The sequence spans 272 residues: Glutamate racemase (272 aa).

Residues 10-11 (DS) and 42-43 (YG) each bind substrate. The active-site Proton donor/acceptor is Cys-74. Residue 75 to 76 (NT) coordinates substrate. The active-site Proton donor/acceptor is Cys-185. 186–187 (TH) contacts substrate.

Belongs to the aspartate/glutamate racemases family.

It carries out the reaction L-glutamate = D-glutamate. Its pathway is cell wall biogenesis; peptidoglycan biosynthesis. Provides the (R)-glutamate required for cell wall biosynthesis. The protein is Glutamate racemase of Bacillus pumilus (strain SAFR-032).